A 308-amino-acid polypeptide reads, in one-letter code: D-alanine--D-alanine ligase (308 aa).

One can recognise an ATP-grasp domain in the interval 103–302 (KTVMKTAGVP…FDELVQWMVE (200 aa)). 130–184 (MEPPYVIKPVADGSSVGVYIITEQHQHPPQELFRDDWAYGDKLLVEKYVAGKELT) serves as a coordination point for ATP. Residues Asp252, Glu269, and Asn271 each coordinate Mg(2+).

Belongs to the D-alanine--D-alanine ligase family. Mg(2+) is required as a cofactor. Mn(2+) serves as cofactor.

It localises to the cytoplasm. The enzyme catalyses 2 D-alanine + ATP = D-alanyl-D-alanine + ADP + phosphate + H(+). It participates in cell wall biogenesis; peptidoglycan biosynthesis. Functionally, cell wall formation. The polypeptide is D-alanine--D-alanine ligase (Rhodopseudomonas palustris (strain BisA53)).